Here is a 637-residue protein sequence, read N- to C-terminus: 1-deoxy-D-xylulose-5-phosphate synthase (637 aa).

Thiamine diphosphate is bound by residues His73 and 113–115 (SHA). A Mg(2+)-binding site is contributed by Asp145. Residues 146–147 (GA), Asn175, Tyr286, and Glu367 contribute to the thiamine diphosphate site. Asn175 is a binding site for Mg(2+).

Belongs to the transketolase family. DXPS subfamily. Homodimer. Mg(2+) serves as cofactor. It depends on thiamine diphosphate as a cofactor.

The catalysed reaction is D-glyceraldehyde 3-phosphate + pyruvate + H(+) = 1-deoxy-D-xylulose 5-phosphate + CO2. It functions in the pathway metabolic intermediate biosynthesis; 1-deoxy-D-xylulose 5-phosphate biosynthesis; 1-deoxy-D-xylulose 5-phosphate from D-glyceraldehyde 3-phosphate and pyruvate: step 1/1. In terms of biological role, catalyzes the acyloin condensation reaction between C atoms 2 and 3 of pyruvate and glyceraldehyde 3-phosphate to yield 1-deoxy-D-xylulose-5-phosphate (DXP). In Thermobifida fusca (strain YX), this protein is 1-deoxy-D-xylulose-5-phosphate synthase.